A 366-amino-acid chain; its full sequence is Terpene synthase 4 (366 aa).

The short motif at D91 to R96 is the DDxx(x)D/E motif element. Residues N241–E249 carry the NDxxSxxxD/E motif motif.

This sequence belongs to the terpene synthase family.

The enzyme catalyses (2E,6E)-farnesyl diphosphate = (1S,2S,4R)-beta-elemene + diphosphate. In terms of biological role, terpene synthase that converts its substrate farnesyl diphosphate (FPP) into the sesquiterpenes bicycloelemene, beta-elemene and 2 yet unidentified sesquiterpenes. This chain is Terpene synthase 4, found in Dictyostelium purpureum (Slime mold).